A 246-amino-acid chain; its full sequence is 3-deoxy-manno-octulosonate cytidylyltransferase (246 aa).

The protein belongs to the KdsB family.

It is found in the cytoplasm. The enzyme catalyses 3-deoxy-alpha-D-manno-oct-2-ulosonate + CTP = CMP-3-deoxy-beta-D-manno-octulosonate + diphosphate. The protein operates within nucleotide-sugar biosynthesis; CMP-3-deoxy-D-manno-octulosonate biosynthesis; CMP-3-deoxy-D-manno-octulosonate from 3-deoxy-D-manno-octulosonate and CTP: step 1/1. Its pathway is bacterial outer membrane biogenesis; lipopolysaccharide biosynthesis. Activates KDO (a required 8-carbon sugar) for incorporation into bacterial lipopolysaccharide in Gram-negative bacteria. This is 3-deoxy-manno-octulosonate cytidylyltransferase from Rickettsia africae (strain ESF-5).